Reading from the N-terminus, the 602-residue chain is Type II restriction enzyme StsI (602 aa).

It catalyses the reaction Endonucleolytic cleavage of DNA to give specific double-stranded fragments with terminal 5'-phosphates.. An S subtype restriction enzyme that recognizes the double-stranded sequences 5'-GGATG-3' and 3'-CATCC-5' and cleaves respectively 15 bases after G-1 and 14 bases before C-1. This Streptococcus sanguinis protein is Type II restriction enzyme StsI (stsIR).